We begin with the raw amino-acid sequence, 239 residues long: Ditrans,polycis-undecaprenyl-diphosphate synthase ((2E,6E)-farnesyl-diphosphate specific) (239 aa).

D18 is a catalytic residue. Position 18 (D18) interacts with Mg(2+). Substrate contacts are provided by residues 19 to 22, W23, R31, H35, and 63 to 65; these read GNGR and SSE. The Proton acceptor role is filled by N66. Substrate is bound by residues W67, R69, R186, and 192–194; that span reads RIS. E205 lines the Mg(2+) pocket.

Belongs to the UPP synthase family. In terms of assembly, homodimer. Requires Mg(2+) as cofactor.

It carries out the reaction 8 isopentenyl diphosphate + (2E,6E)-farnesyl diphosphate = di-trans,octa-cis-undecaprenyl diphosphate + 8 diphosphate. Catalyzes the sequential condensation of isopentenyl diphosphate (IPP) with (2E,6E)-farnesyl diphosphate (E,E-FPP) to yield (2Z,6Z,10Z,14Z,18Z,22Z,26Z,30Z,34E,38E)-undecaprenyl diphosphate (di-trans,octa-cis-UPP). UPP is the precursor of glycosyl carrier lipid in the biosynthesis of bacterial cell wall polysaccharide components such as peptidoglycan and lipopolysaccharide. In Haemophilus influenzae (strain ATCC 51907 / DSM 11121 / KW20 / Rd), this protein is Ditrans,polycis-undecaprenyl-diphosphate synthase ((2E,6E)-farnesyl-diphosphate specific).